Consider the following 297-residue polypeptide: HTH-type transcriptional regulator AceR (297 aa).

In terms of domain architecture, HTH lysR-type spans Met-1–Thr-60. Positions Phe-20 to Ala-39 form a DNA-binding region, H-T-H motif.

The protein belongs to the LysR transcriptional regulatory family. In terms of assembly, homodimer and homotetramer. Binding of chlorhexidine at the inducer-binding domain causes a quaternary structural change that favors interactions between dimers to form tetramers.

It localises to the cytoplasm. Regulates the expression of the AceI transporter. Binds DNA and chlorhexidine. Binds to regulatory sites within the intergenic region between the aceI and aceR genes, and affects the interaction between RNA polymerase (RNAP) and promoter DNA both in the presence and in the absence of chlorhexidine. In the absence of chlorhexidine, prevents transcription of the aceI gene by disrupting interactions between the promoter DNA and RNAP. In the presence of chlorhexidine, activates expression of aceI. When AceR interacts with chlorhexidine, it undergoes a conformational change and the tetrameric form either releases the DNA or shifts the position of the DNA-binding region to allow RNAP to bind onto the promoter DNA to proceed with aceI transcription. This chain is HTH-type transcriptional regulator AceR, found in Acinetobacter baumannii (strain ATCC 17978 / DSM 105126 / CIP 53.77 / LMG 1025 / NCDC KC755 / 5377).